The primary structure comprises 464 residues: Chitobiosyldiphosphodolichol beta-mannosyltransferase (464 aa).

Over 1–2 (MA) the chain is Lumenal. A helical transmembrane segment spans residues 3-23 (ASCLVLLALCLLLPLLLLGGW). Topologically, residues 24–99 (KRWRRGRAAR…ELQSLAVGPR (76 aa)) are cytoplasmic. The helical intramembrane region spans 100–120 (VFQYGVKVVLQAMYLLWKLMW). The Cytoplasmic segment spans residues 121 to 464 (REPGAYIFLQ…QTVLPLVMDT (344 aa)). Position 242 is a phosphoserine (Ser242). The tract at residues 243 to 262 (PFRARSEPEDPVTERSAFTE) is disordered.

This sequence belongs to the glycosyltransferase group 1 family. Glycosyltransferase 33 subfamily.

Its subcellular location is the endoplasmic reticulum membrane. It carries out the reaction an N,N'-diacetylchitobiosyl-diphospho-di-trans,poly-cis-dolichol + GDP-alpha-D-mannose = a beta-D-Man-(1-&gt;4)-beta-D-GlcNAc-(1-&gt;4)-alpha-D-GlcNAc-diphospho-di-trans,poly-cis-dolichol + GDP + H(+). Its pathway is protein modification; protein glycosylation. Mannosyltransferase that operates in the biosynthetic pathway of dolichol-linked oligosaccharides, the glycan precursors employed in protein asparagine (N)-glycosylation. The assembly of dolichol-linked oligosaccharides begins on the cytosolic side of the endoplasmic reticulum membrane and finishes in its lumen. The sequential addition of sugars to dolichol pyrophosphate produces dolichol-linked oligosaccharides containing fourteen sugars, including two GlcNAcs, nine mannoses and three glucoses. Once assembled, the oligosaccharide is transferred from the lipid to nascent proteins by oligosaccharyltransferases. Catalyzes, on the cytoplasmic face of the endoplasmic reticulum, the addition of the first mannose residues to the dolichol-linked oligosaccharide chain, to produce Man1GlcNAc(2)-PP-dolichol core oligosaccharide. Man1GlcNAc(2)-PP-dolichol is a substrate for ALG2, the following enzyme in the biosynthetic pathway. The polypeptide is Chitobiosyldiphosphodolichol beta-mannosyltransferase (Homo sapiens (Human)).